Consider the following 220-residue polypeptide: Ribosomal RNA large subunit methyltransferase E (220 aa).

The S-adenosyl-L-methionine site is built by Gly-64, Trp-66, Asp-92, Asp-108, and Asp-133. Lys-173 (proton acceptor) is an active-site residue.

It belongs to the class I-like SAM-binding methyltransferase superfamily. RNA methyltransferase RlmE family.

It is found in the cytoplasm. The enzyme catalyses uridine(2552) in 23S rRNA + S-adenosyl-L-methionine = 2'-O-methyluridine(2552) in 23S rRNA + S-adenosyl-L-homocysteine + H(+). Specifically methylates the uridine in position 2552 of 23S rRNA at the 2'-O position of the ribose in the fully assembled 50S ribosomal subunit. This is Ribosomal RNA large subunit methyltransferase E from Acidovorax sp. (strain JS42).